The following is a 195-amino-acid chain: UPF0167 protein CbrC (195 aa).

The protein belongs to the UPF0167 family.

This is UPF0167 protein CbrC (cbrC) from Escherichia coli (strain K12).